The sequence spans 282 residues: Orotidine 5'-phosphate decarboxylase (282 aa).

Residue K95 is the Proton donor of the active site.

This sequence belongs to the OMP decarboxylase family. Type 2 subfamily.

It catalyses the reaction orotidine 5'-phosphate + H(+) = UMP + CO2. The protein operates within pyrimidine metabolism; UMP biosynthesis via de novo pathway; UMP from orotate: step 2/2. This chain is Orotidine 5'-phosphate decarboxylase, found in Polaromonas naphthalenivorans (strain CJ2).